The following is a 221-amino-acid chain: MGLFGKTQEKPPKDLINEWSLKIRKEMRVIDRQIRDIQREEEKVKRSIKDAAKKGQKDVCIILAKEMIQSKRAINKLYASKAQMNSVLLSMKNQLSVLRVAGALQKSTEVMKAMQSLVKIPEIQATMRDLSKEMMKAGIIEEMLEDTLEGMDDEEEMEEAAEAEVDKILFEITAGALGKAPSKVTDLPDPVAIGATAAPEEESEEEEEIEEMQSRLAALRS.

Glycine 2 is lipidated: N-myristoyl glycine. The stretch at 22–54 (KIRKEMRVIDRQIRDIQREEEKVKRSIKDAAKK) forms a coiled coil. Important for autoinhibitory function regions lie at residues 59-64 (VCIILA) and 168-169 (IL). Residues 144–221 (LEDTLEGMDD…MQSRLAALRS (78 aa)) adopt a coiled-coil conformation. Positions 181 to 221 (PSKVTDLPDPVAIGATAAPEEESEEEEEIEEMQSRLAALRS) are disordered. The segment covering 199–211 (PEEESEEEEEIEE) has biased composition (acidic residues). The MIT-interacting motif motif lies at 200 to 210 (EEESEEEEEIE). 2 interaction with STAMBP regions span residues 202–206 (ESEEE) and 220–221 (RS).

It belongs to the SNF7 family. Probable core component of the endosomal sorting required for transport complex III (ESCRT-III). ESCRT-III components are thought to multimerize to form a flat lattice on the perimeter membrane of the endosome. Several assembly forms of ESCRT-III may exist that interact and act sequentially.

The protein localises to the cytoplasm. The protein resides in the cytosol. Its subcellular location is the membrane. It is found in the endosome. It localises to the late endosome membrane. Functionally, probable core component of the endosomal sorting required for transport complex III (ESCRT-III) which is involved in multivesicular bodies (MVBs) formation and sorting of endosomal cargo proteins into MVBs. MVBs contain intraluminal vesicles (ILVs) that are generated by invagination and scission from the limiting membrane of the endosome and mostly are delivered to lysosomes enabling degradation of membrane proteins, such as stimulated growth factor receptors, lysosomal enzymes and lipids. Involved in late stages of cytokinesis. Plays a role in endosomal sorting/trafficking of EGF receptor. In Danio rerio (Zebrafish), this protein is Charged multivesicular body protein 3 (chmp3).